The primary structure comprises 299 residues: MGYVRTGILMAVMTALFLGVGALIGGQSGAIIALIVAALMNLFTFWNSDKAVLSMHGAHEVDPRAAPDLHAMVRGLAERAGMPMPRLYLIETDQPNAFATGRNPENAAVAVTRGLLRALSPEEVAGVVAHELAHIKNRDTLLMTVTATFAGAISMLANFAFFFGGGSNQEGERPVGIVGTLALMILAPLAAGLVQMAISRSREYEADRIGAEICGRPLWLASALGKIEGLARRIDNTRAERNPATAHMFIINPLHAMSHDRLFATHPNTANRIAALQAMAGAGVERSSMPRVPRRGPWR.

Transmembrane regions (helical) follow at residues 7–24 (GILM…GALI) and 29–46 (GAII…FTFW). Position 130 (histidine 130) interacts with Zn(2+). Glutamate 131 is an active-site residue. Histidine 134 is a Zn(2+) binding site. 2 helical membrane passes run 145-165 (VTAT…FFGG) and 174-194 (PVGI…AGLV). Glutamate 203 serves as a coordination point for Zn(2+).

This sequence belongs to the peptidase M48B family. Zn(2+) is required as a cofactor.

The protein resides in the cell inner membrane. The polypeptide is Protease HtpX homolog (Cereibacter sphaeroides (strain ATCC 17025 / ATH 2.4.3) (Rhodobacter sphaeroides)).